A 103-amino-acid chain; its full sequence is N(4)-acetylcytidine amidohydrolase (103 aa).

An ASCH domain is found at 6–101 (ITFFQRFQDD…QTQFYVIEFK (96 aa)). The active-site Proton acceptor is Lys-21. Catalysis depends on Thr-24, which acts as the Nucleophile. Catalysis depends on Glu-74, which acts as the Proton donor.

The protein belongs to the N(4)-acetylcytidine amidohydrolase family.

The enzyme catalyses N(4)-acetylcytidine + H2O = cytidine + acetate + H(+). It catalyses the reaction N(4)-acetyl-2'-deoxycytidine + H2O = 2'-deoxycytidine + acetate + H(+). It carries out the reaction N(4)-acetylcytosine + H2O = cytosine + acetate + H(+). Catalyzes the hydrolysis of N(4)-acetylcytidine (ac4C). In Escherichia coli O127:H6 (strain E2348/69 / EPEC), this protein is N(4)-acetylcytidine amidohydrolase (yqfB).